The following is a 205-amino-acid chain: Large ribosomal subunit protein uL18 (205 aa).

It belongs to the universal ribosomal protein uL18 family. In terms of assembly, part of the 50S ribosomal subunit. Contacts the 5S and 23S rRNAs.

Functionally, this is one of the proteins that bind and probably mediate the attachment of the 5S RNA into the large ribosomal subunit, where it forms part of the central protuberance. In Haloquadratum walsbyi (strain DSM 16790 / HBSQ001), this protein is Large ribosomal subunit protein uL18.